A 262-amino-acid polypeptide reads, in one-letter code: Polyamine aminopropyltransferase (262 aa).

One can recognise a PABS domain in the interval 1–249 (MWITQEITPY…DIHRAAFALP (249 aa)). Asparagine 29 is a binding site for S-methyl-5'-thioadenosine. Residue aspartate 83 coordinates spermidine. The Proton acceptor role is filled by aspartate 155.

The protein belongs to the spermidine/spermine synthase family. In terms of assembly, homodimer or homotetramer.

It is found in the cytoplasm. It carries out the reaction S-adenosyl 3-(methylsulfanyl)propylamine + putrescine = S-methyl-5'-thioadenosine + spermidine + H(+). Its pathway is amine and polyamine biosynthesis; spermidine biosynthesis; spermidine from putrescine: step 1/1. Catalyzes the irreversible transfer of a propylamine group from the amino donor S-adenosylmethioninamine (decarboxy-AdoMet) to putrescine (1,4-diaminobutane) to yield spermidine. This Helicobacter pylori (strain HPAG1) protein is Polyamine aminopropyltransferase.